The primary structure comprises 99 residues: Malonate decarboxylase acyl carrier protein (99 aa).

O-(phosphoribosyl dephospho-coenzyme A)serine is present on serine 25.

It belongs to the MdcC family. In terms of processing, covalently binds the prosthetic group of malonate decarboxylase.

It localises to the cytoplasm. Subunit of malonate decarboxylase, it is an acyl carrier protein to which acetyl and malonyl thioester residues are bound via a 2'-(5''-phosphoribosyl)-3'-dephospho-CoA prosthetic group and turn over during the catalytic mechanism. This Pseudomonas aeruginosa (strain LESB58) protein is Malonate decarboxylase acyl carrier protein.